Consider the following 256-residue polypeptide: N-glycosylase/DNA lyase (256 aa).

The 8-oxoguanine site is built by Gln31, Ser58, and Trp69. Residues 125–184 (TLRQLSHIVGARREQKTLVFTIKILNYAYMCSRGVNRVLPFDIPIPVDYRVARLTWCAGL) form a helix-hairpin-helix region. The Schiff-base intermediate with DNA role is filled by Lys140. 8-oxoguanine is bound by residues Phe144 and Pro170. Residue Asp172 is part of the active site. Asp218 and Trp222 together coordinate 8-oxoguanine.

The protein belongs to the archaeal N-glycosylase/DNA lyase (AGOG) family.

The catalysed reaction is 2'-deoxyribonucleotide-(2'-deoxyribose 5'-phosphate)-2'-deoxyribonucleotide-DNA = a 3'-end 2'-deoxyribonucleotide-(2,3-dehydro-2,3-deoxyribose 5'-phosphate)-DNA + a 5'-end 5'-phospho-2'-deoxyribonucleoside-DNA + H(+). DNA repair enzyme that is part of the base excision repair (BER) pathway; protects from oxidative damage by removing the major product of DNA oxidation, 8-oxoguanine (GO), from single- and double-stranded DNA substrates. The protein is N-glycosylase/DNA lyase of Pyrobaculum aerophilum (strain ATCC 51768 / DSM 7523 / JCM 9630 / CIP 104966 / NBRC 100827 / IM2).